Reading from the N-terminus, the 187-residue chain is Putative glutathione-dependent formaldehyde-activating enzyme (187 aa).

The 147-residue stretch at 20-166 (FQGGVLKCKC…FESLGLESYD (147 aa)) folds into the CENP-V/GFA domain. Cys-27, Cys-29, Cys-48, Cys-50, Cys-53, Cys-95, and Cys-98 together coordinate Zn(2+).

This sequence belongs to the Gfa family. It depends on Zn(2+) as a cofactor.

The catalysed reaction is S-(hydroxymethyl)glutathione = glutathione + formaldehyde. The protein operates within one-carbon metabolism; formaldehyde degradation; formate from formaldehyde (glutathione route): step 1/3. Its function is as follows. Catalyzes the condensation of formaldehyde and glutathione to S-hydroxymethylglutathione. In Verticillium alfalfae (strain VaMs.102 / ATCC MYA-4576 / FGSC 10136) (Verticillium wilt of alfalfa), this protein is Putative glutathione-dependent formaldehyde-activating enzyme.